The sequence spans 360 residues: DNA replication and repair protein RecF (360 aa).

An ATP-binding site is contributed by 33–40 (GENGSGKT).

Belongs to the RecF family.

It localises to the cytoplasm. Functionally, the RecF protein is involved in DNA metabolism; it is required for DNA replication and normal SOS inducibility. RecF binds preferentially to single-stranded, linear DNA. It also seems to bind ATP. This chain is DNA replication and repair protein RecF, found in Rickettsia massiliae (strain Mtu5).